Here is a 277-residue protein sequence, read N- to C-terminus: Exosome complex component Rrp42 (277 aa).

It belongs to the RNase PH family. Rrp42 subfamily. As to quaternary structure, component of the archaeal exosome complex. Forms a hexameric ring-like arrangement composed of 3 Rrp41-Rrp42 heterodimers. The hexameric ring associates with a trimer of Rrp4 and/or Csl4 subunits.

It localises to the cytoplasm. Its function is as follows. Non-catalytic component of the exosome, which is a complex involved in RNA degradation. Contributes to the structuring of the Rrp41 active site. The chain is Exosome complex component Rrp42 from Pyrococcus furiosus (strain ATCC 43587 / DSM 3638 / JCM 8422 / Vc1).